A 607-amino-acid chain; its full sequence is Protease Do-like 2, chloroplastic (607 aa).

Residues 41-104 are disordered; it reads SSNIKRKSSR…LSDFSRDQQT (64 aa). The span at 87–104 shows a compositional bias: basic and acidic residues; sequence PKKEKKESLSDFSRDQQT. The interval 118 to 317 is serine protease; that stretch reads VVKVYCTHTA…LTDYERNGKY (200 aa). Active-site charge relay system residues include His159, Asp190, and Ser268. Residues 308–403 enclose the PDZ domain; the sequence is LTDYERNGKY…YLISQKFAGD (96 aa).

Belongs to the peptidase S1C family.

Its subcellular location is the plastid. The protein resides in the chloroplast thylakoid membrane. Serine protease that performs the primary cleavage of the photodamaged D1 protein in plant photosystem II. This Arabidopsis thaliana (Mouse-ear cress) protein is Protease Do-like 2, chloroplastic (DEGP2).